The primary structure comprises 456 residues: Bifunctional protein GlmU (456 aa).

Positions M1–K228 are pyrophosphorylase. UDP-N-acetyl-alpha-D-glucosamine contacts are provided by residues L11–G14, K25, Q75, G80–T81, Y102–D104, G138, E153, N168, and N226. D104 is a Mg(2+) binding site. N226 is a Mg(2+) binding site. Positions L229–A249 are linker. Residues G250–Q456 are N-acetyltransferase. R332 and K350 together coordinate UDP-N-acetyl-alpha-D-glucosamine. H362 (proton acceptor) is an active-site residue. UDP-N-acetyl-alpha-D-glucosamine-binding residues include Y365 and N376. Acetyl-CoA is bound by residues A379, N385 to Y386, S404, A422, and R439.

This sequence in the N-terminal section; belongs to the N-acetylglucosamine-1-phosphate uridyltransferase family. The protein in the C-terminal section; belongs to the transferase hexapeptide repeat family. As to quaternary structure, homotrimer. Mg(2+) is required as a cofactor.

It localises to the cytoplasm. The enzyme catalyses alpha-D-glucosamine 1-phosphate + acetyl-CoA = N-acetyl-alpha-D-glucosamine 1-phosphate + CoA + H(+). The catalysed reaction is N-acetyl-alpha-D-glucosamine 1-phosphate + UTP + H(+) = UDP-N-acetyl-alpha-D-glucosamine + diphosphate. It functions in the pathway nucleotide-sugar biosynthesis; UDP-N-acetyl-alpha-D-glucosamine biosynthesis; N-acetyl-alpha-D-glucosamine 1-phosphate from alpha-D-glucosamine 6-phosphate (route II): step 2/2. It participates in nucleotide-sugar biosynthesis; UDP-N-acetyl-alpha-D-glucosamine biosynthesis; UDP-N-acetyl-alpha-D-glucosamine from N-acetyl-alpha-D-glucosamine 1-phosphate: step 1/1. Its pathway is bacterial outer membrane biogenesis; LPS lipid A biosynthesis. Its function is as follows. Catalyzes the last two sequential reactions in the de novo biosynthetic pathway for UDP-N-acetylglucosamine (UDP-GlcNAc). The C-terminal domain catalyzes the transfer of acetyl group from acetyl coenzyme A to glucosamine-1-phosphate (GlcN-1-P) to produce N-acetylglucosamine-1-phosphate (GlcNAc-1-P), which is converted into UDP-GlcNAc by the transfer of uridine 5-monophosphate (from uridine 5-triphosphate), a reaction catalyzed by the N-terminal domain. The chain is Bifunctional protein GlmU from Neisseria meningitidis serogroup B (strain ATCC BAA-335 / MC58).